An 858-amino-acid chain; its full sequence is MQEQYNPQDLEQKIQKHWDDSKTFVVTEDASKEKFYCLSMFPYPSGRLHMGHVRNYTIGDVVSRYQRLQGKNVMQPIGWDAFGLPAENAAVKNKTAPAPWTYENIEYMKNQLKLLGFGYDWSREFATCTPEYYRWEQEFFTKLYNKGLVYKKTSSVNWCPNDQTVLANEQVEDGCCWRCDTPVEQKKIPQWFIKITEYAQELLDDLDTLDGWPDMVKTMQRNWIGRSEGVELSFAVNGEEAPLEVYTTRPDTLMGVTYVGIAAGHPLAEQAAAKNPELFAFTEECRNTKVAEAELATMEKKGMDTGLRAIHPLNGREVPIYVANFVLMDYGTGAVMAVPAHDQRDYEFATKYGLDIIPVIKPEDGSDVDVSDVAYTEKGVLFDSGEFDGLAFQDAFDAIAAKLEAEGKGKKTVNFRLRDWGVSRQRYWGAPIPMVTTEDGEVHPVPADQLPVILPEDVVMDGVTSPIKADKEWAKTTFNGEPALRETDTFDTFMESSWYYARYCSPQADDILDPEKANYWLPVDQYVGGIEHACMHLLYSRFFHKLLRDAGYVTSNEPFKQLLCQGMVLSDAFHHTNEKGTKEWIAPTDVTIERDAKGRIEKAVDDQGREVQHSGMIKMSKSKNNGIDPQEMVDKFGADTVRLFMMFAAPADMTLEWQESGVEGASRFLKRVWKLVHEHTTKGTTEALDVAALSGDQKALRRDVHKTIAKVSDDIGRRQTFNTAIAAIMELMNKLNKAPQGSAQDRALLDEALKAVVVMLYPMTPHASFAMWEALGESNIDTTAWPTFDEKALIEDEKTIVVMINGKLRAKLIVAADATEEQVKELGLNDENALKFLDGLTIRKVIYVPGKLLNIVAN.

Residues 42–52 (PYPSGRLHMGH) carry the 'HIGH' region motif. Residues 618–622 (KMSKS) carry the 'KMSKS' region motif. Lys621 contacts ATP.

It belongs to the class-I aminoacyl-tRNA synthetase family.

The protein resides in the cytoplasm. It catalyses the reaction tRNA(Leu) + L-leucine + ATP = L-leucyl-tRNA(Leu) + AMP + diphosphate. This is Leucine--tRNA ligase from Aliivibrio salmonicida (strain LFI1238) (Vibrio salmonicida (strain LFI1238)).